A 199-amino-acid polypeptide reads, in one-letter code: Inner membrane protein E199L (199 aa).

An N-linked (GlcNAc...) asparagine; by host glycan is attached at Asn-131. The chain crosses the membrane as a helical span at residues 150–170; sequence INVMNHPFLTLILIILILVII.

It belongs to the asfivirus E199L family. As to quaternary structure, interacts with host PYCR2; this interaction results in autophagy activation. In terms of processing, contains intramolecular disulfide bonds.

It is found in the virion membrane. It localises to the host membrane. In terms of biological role, essential for viral fusion with host endosomal membrane and core release. Not required for virus morphogenesis and egress. Induces complete autophagy through the interaction with and down-regulation of host PYCR2. In African swine fever virus (isolate Tick/Malawi/Lil 20-1/1983) (ASFV), this protein is Inner membrane protein E199L.